Consider the following 259-residue polypeptide: Enkurin (259 aa).

2 disordered regions span residues 1-26 and 76-98; these read MVAM…EPPQ and PPKK…TDHP. The segment covering 76-88 has biased composition (basic and acidic residues); sequence PPKKKFEWNERRK. An SH3-binding motif is present at residues 86–92; that stretch reads RRKPPVP. Positions 163–255 constitute an Enkurin domain; that stretch reads KRNEEVKKAQ…VLEKHKVIYI (93 aa). The interaction with TRPC proteins stretch occupies residues 163–258; the sequence is KRNEEVKKAQ…KHKVIYIANK (96 aa). The IQ domain occupies 179–190; sequence IQENLRKAAMKR.

Microtubule inner protein component of sperm flagellar doublet microtubules. Binds calmodulin via its IQ domain. Interacts with TRPC1, TRPC2, TRPC5, but not TRPC3. Interacts with CFAP45. In terms of tissue distribution, expressed in trachea multiciliated cells.

It localises to the cytoplasm. The protein localises to the cytoskeleton. The protein resides in the flagellum axoneme. It is found in the cilium axoneme. Functionally, adapter that functions to localize a calcium-sensitive signal transduction machinery in sperm to a calcium-permeable ion channel. Microtubule inner protein (MIP) part of the dynein-decorated doublet microtubules (DMTs) in cilia axoneme, which is required for motile cilia beating. This Bos taurus (Bovine) protein is Enkurin (ENKUR).